Reading from the N-terminus, the 149-residue chain is Large ribosomal subunit protein bL9 (149 aa).

It belongs to the bacterial ribosomal protein bL9 family.

In terms of biological role, binds to the 23S rRNA. This chain is Large ribosomal subunit protein bL9, found in Salmonella dublin (strain CT_02021853).